Here is a 309-residue protein sequence, read N- to C-terminus: Lipoyl synthase (309 aa).

[4Fe-4S] cluster-binding residues include cysteine 37, cysteine 42, cysteine 48, cysteine 67, cysteine 71, cysteine 74, and serine 281. In terms of domain architecture, Radical SAM core spans 53–270 (DGPGTATFML…RVAETEFGFL (218 aa)).

This sequence belongs to the radical SAM superfamily. Lipoyl synthase family. The cofactor is [4Fe-4S] cluster.

It localises to the cytoplasm. It catalyses the reaction [[Fe-S] cluster scaffold protein carrying a second [4Fe-4S](2+) cluster] + N(6)-octanoyl-L-lysyl-[protein] + 2 oxidized [2Fe-2S]-[ferredoxin] + 2 S-adenosyl-L-methionine + 4 H(+) = [[Fe-S] cluster scaffold protein] + N(6)-[(R)-dihydrolipoyl]-L-lysyl-[protein] + 4 Fe(3+) + 2 hydrogen sulfide + 2 5'-deoxyadenosine + 2 L-methionine + 2 reduced [2Fe-2S]-[ferredoxin]. The protein operates within protein modification; protein lipoylation via endogenous pathway; protein N(6)-(lipoyl)lysine from octanoyl-[acyl-carrier-protein]: step 2/2. Functionally, catalyzes the radical-mediated insertion of two sulfur atoms into the C-6 and C-8 positions of the octanoyl moiety bound to the lipoyl domains of lipoate-dependent enzymes, thereby converting the octanoylated domains into lipoylated derivatives. This Natronomonas pharaonis (strain ATCC 35678 / DSM 2160 / CIP 103997 / JCM 8858 / NBRC 14720 / NCIMB 2260 / Gabara) (Halobacterium pharaonis) protein is Lipoyl synthase.